The sequence spans 342 residues: MDLTERHKRILKALVDEFIQENRPVGSKTLFDKHDIGLSPASIRTVLKDLEDYGYLASKHTSGGRIPTERGYRFYVDSLVILYELTLKEKQRIQQEYLKMQFKLDQILKATASVLSSLSNAAGIVIGPAKNLDTLKHLELIHVRGDEILMILVMRSGTVLHRNIFVDRNYSQEALYQVSKYLNDNLKGYDIYEIQNVVVPNLMVRRDGPEDFTRIAELLSSAMNPDNSEVTLYIDGFKNLYANFRDEEQQLSQVLSLLDDQGFLKEFFSEYIDQDGVYTIIGKDGNRSMSGVSIITSNYKMGEKKIGALGIIGPQRMDYNRALPLVDFTSKLVSEMVTRISK.

It belongs to the HrcA family.

Its function is as follows. Negative regulator of class I heat shock genes (grpE-dnaK-dnaJ and groELS operons). Prevents heat-shock induction of these operons. The chain is Heat-inducible transcription repressor HrcA from Leptospira borgpetersenii serovar Hardjo-bovis (strain JB197).